The chain runs to 31 residues: Cycloviolin-A (31 aa).

Positions 1–31 form a cross-link, cyclopeptide (Gly-Asn); the sequence is GVIPCGESCVFIPCISAAIGCSCKNKVCYRN. 3 disulfide bridges follow: Cys-5-Cys-21, Cys-9-Cys-23, and Cys-14-Cys-28.

This is a cyclic peptide.

Probably participates in a plant defense mechanism. Has anti-HIV activity. In Leonia cymosa (Sacha uba), this protein is Cycloviolin-A.